The following is a 593-amino-acid chain: MSESLTRIAIVSEDKCRPKKCRQECRRSCPVVRTGKLCIEVNPTDRIAFISETLCIGCGICVKKCPFGAINIINLPTNLESEVTHRYSANSFKLHRLPTPRPGQVLGLVGTNGIGKSTALKILSGKMKPNLGRYDNPPDWAEVVKYFRGSELQNFFTKVVEDNIKALIKPQYVDHIPRAIKTGDKTVSGLIKARANNNNFEEVMDHTDLQNLLNREVGHLSGGELQRFAIAAVATQKADVYMFDEPSSYLDIKQRLKAGRVIRSLLATTNYVIVVEHDLSVLDYLSDFVCVLYGVPSMYGVVTLPYSVREGINIFLDGHIPTENLRFRSEALTFRLADASDEITADRTAEYNYPDHVIEQGDFKLTIKSGGFSDAEIIVLLGENGTGKTTFCKWMAKNSDLKISMKPQTIAPKFQGTVRMLFLKKIRAAFLNGKFQSEVCKPLSIDNIIDQEVLNLSGGELQRVAICLALGMPADVYLIDEPSAYLDSEQRIIASKVIRRFIVNSRKTAFIVEHDFIMATYLADRVILFEGQPSRDARCNPPQSLLTGMNTFLKNLDVTFRRDPNTLRPRINKFDSQMDQEQKNAGNYFFLEN.

2 consecutive 4Fe-4S ferredoxin-type domains span residues 7–39 (RIAI…KLCI) and 46–75 (RIAF…IINL). 2 ABC transporter domains span residues 70-318 (INII…FLDG) and 334-556 (FRLA…LKNL). ATP is bound by residues 110–117 (GTNGIGKS) and 382–389 (GENGTGKT).

It belongs to the ABC transporter superfamily. In terms of assembly, component of the multifactor complex (MFC). The complex associates with pre-initiation complexes.

Its subcellular location is the cytoplasm. It is found in the nucleus. Its function is as follows. Component of the multifactor complex (MFC) involved in translation initiation. Required for the binding of MFC to the 40S ribosome. Required for the processing and nuclear export of the 60S and 40S ribosomal subunits. This is Translation initiation factor rli1 (rli1) from Schizosaccharomyces pombe (strain 972 / ATCC 24843) (Fission yeast).